A 118-amino-acid chain; its full sequence is Large ribosomal subunit protein bL20 (118 aa).

This sequence belongs to the bacterial ribosomal protein bL20 family.

Functionally, binds directly to 23S ribosomal RNA and is necessary for the in vitro assembly process of the 50S ribosomal subunit. It is not involved in the protein synthesizing functions of that subunit. This chain is Large ribosomal subunit protein bL20, found in Cyanothece sp. (strain PCC 7425 / ATCC 29141).